Consider the following 348-residue polypeptide: Rhodopsin (348 aa).

At M1 the chain carries N-acetylmethionine. The Extracellular portion of the chain corresponds to 1 to 36; it reads MNGTEGPNFYVPFSNKTGVVRSPFEYPQYYLAEPWQ. Residues N2 and N15 are each glycosylated (N-linked (GlcNAc...) asparagine). Residues 37-61 form a helical membrane-spanning segment; that stretch reads FSMLAAYMFLLIVLGFPINFLTLYV. Residues 62-73 are Cytoplasmic-facing; that stretch reads TVQHKKLRTPLN. Residues 74–96 traverse the membrane as a helical segment; it reads YILLNLAVADLFMVFGGFTTTLY. Over 97–110 the chain is Extracellular; that stretch reads TSLHGYFVFGPTGC. C110 and C187 are disulfide-bonded. Residues 111–133 form a helical membrane-spanning segment; the sequence is NVEGFFATLGGEIALWSLVVLAI. The 'Ionic lock' involved in activated form stabilization signature appears at 134 to 136; the sequence is ERY. Over 134 to 152 the chain is Cytoplasmic; sequence ERYVVVCKPMSNFRFGENH. A helical transmembrane segment spans residues 153–173; that stretch reads AIMGVAFTWVMALACAAPPLA. The Extracellular segment spans residues 174–202; sequence GWSRYIPEGMQCSCGIDYYTLKPEVNNES. Residue E201 participates in Zn(2+) binding. Residues 203–224 traverse the membrane as a helical segment; that stretch reads FVIYMFVVHFTIPMIVIFFCYG. Residues 225 to 252 lie on the Cytoplasmic side of the membrane; sequence QLVFTVKEAAAQQQESATTQKAEKEVTR. A helical membrane pass occupies residues 253–274; that stretch reads MVIIMVIAFLICWVPYASVAFY. Topologically, residues 275–286 are extracellular; sequence IFTHQGSNFGPI. Residue Q279 participates in Zn(2+) binding. Residues 287–308 form a helical membrane-spanning segment; that stretch reads FMTLPAFFAKSASIYNPVIYIM. K296 is subject to N6-(retinylidene)lysine. Residues 309-348 lie on the Cytoplasmic side of the membrane; it reads MNKQFRNCMLTTICCGKNPFAEEEGATTVSKTETSQVAPA. 2 S-palmitoyl cysteine lipidation sites follow: C322 and C323. The segment at 330-348 is interaction with SAG; sequence EEEGATTVSKTETSQVAPA. 2 positions are modified to phosphothreonine: T335 and T336. At S338 the chain carries Phosphoserine. T340 and T342 each carry phosphothreonine. S343 carries the phosphoserine modification.

Belongs to the G-protein coupled receptor 1 family. Opsin subfamily. In terms of assembly, homodimer. May form a complex composed of RHO, GRK1 and RCVRN in a Ca(2+)-dependent manner; RCVRN prevents the interaction between GRK1 and RHO. Interacts with GRK1. Interacts (phosphorylated form) with SAG. Interacts with GNAT1. Interacts with GNAT3. SAG and G-proteins compete for a common binding site. Interacts with PRCD; the interaction promotes PRCD stability. Forms a complex with ASAP1 and ARF4. Forms a complex with ASAP1, RAB11A, Rabin8/RAB3IP, ARF4 and RAB11FIP3; the complex regulates Golgi-to-cilia rhodopsin/RHO transport in photoreceptors. Phosphorylated on some or all of the serine and threonine residues present in the C-terminal region. In terms of processing, contains one covalently linked retinal chromophore. Upon light absorption, the covalently bound 11-cis-retinal is converted to all-trans-retinal. After hydrolysis of the Schiff base and release of the covalently bound all-trans-retinal, active rhodopsin is regenerated by binding of a fresh molecule of 11-cis-retinal.

The protein localises to the membrane. Its subcellular location is the cell projection. The protein resides in the cilium. It localises to the photoreceptor outer segment. Photoreceptor required for image-forming vision at low light intensity. Required for photoreceptor cell viability after birth. Light-induced isomerization of 11-cis to all-trans retinal triggers a conformational change that activates signaling via G-proteins. Subsequent receptor phosphorylation mediates displacement of the bound G-protein alpha subunit by the arrestin SAG and terminates signaling. This is Rhodopsin (RHO) from Trichechus manatus (Caribbean manatee).